Reading from the N-terminus, the 306-residue chain is Acetaldehyde dehydrogenase (306 aa).

Cysteine 131 acts as the Acyl-thioester intermediate in catalysis. Residues 162–170 (SAGPGTRKN) and asparagine 273 each bind NAD(+).

This sequence belongs to the acetaldehyde dehydrogenase family.

It catalyses the reaction acetaldehyde + NAD(+) + CoA = acetyl-CoA + NADH + H(+). The sequence is that of Acetaldehyde dehydrogenase from Albidiferax ferrireducens (strain ATCC BAA-621 / DSM 15236 / T118) (Rhodoferax ferrireducens).